The chain runs to 115 residues: Hydrogenase maturation factor HypA (115 aa).

Residue histidine 2 participates in Ni(2+) binding. Zn(2+)-binding residues include cysteine 73, cysteine 76, cysteine 89, and cysteine 92.

It belongs to the HypA/HybF family.

Involved in the maturation of [NiFe] hydrogenases. Required for nickel insertion into the metal center of the hydrogenase. In Nitrosospira multiformis (strain ATCC 25196 / NCIMB 11849 / C 71), this protein is Hydrogenase maturation factor HypA.